Here is a 1097-residue protein sequence, read N- to C-terminus: DNA-directed RNA polymerase subunit beta (1097 aa).

Positions 1071–1097 (MQDVNPKRNTPSRPTYESLGTSEYAED) are disordered. Residues 1077–1091 (KRNTPSRPTYESLGT) show a composition bias toward polar residues.

This sequence belongs to the RNA polymerase beta chain family. In terms of assembly, in cyanobacteria the RNAP catalytic core is composed of 2 alpha, 1 beta, 1 beta', 1 gamma and 1 omega subunit. When a sigma factor is associated with the core the holoenzyme is formed, which can initiate transcription.

It carries out the reaction RNA(n) + a ribonucleoside 5'-triphosphate = RNA(n+1) + diphosphate. Its function is as follows. DNA-dependent RNA polymerase catalyzes the transcription of DNA into RNA using the four ribonucleoside triphosphates as substrates. The sequence is that of DNA-directed RNA polymerase subunit beta from Prochlorococcus marinus subsp. pastoris (strain CCMP1986 / NIES-2087 / MED4).